Reading from the N-terminus, the 523-residue chain is Ribonuclease Y (523 aa).

The chain crosses the membrane as a helical span at residues 7–24; that stretch reads LSSLASALLAGGGTYLVY. Residues 213-279 enclose the KH domain; the sequence is LINVVNLPND…TRTIEALVED (67 aa). Positions 339–432 constitute an HD domain; the sequence is ALGHSLEVAN…VCAADALSAA (94 aa).

This sequence belongs to the RNase Y family.

The protein resides in the cell membrane. Its function is as follows. Endoribonuclease that initiates mRNA decay. In Wolinella succinogenes (strain ATCC 29543 / DSM 1740 / CCUG 13145 / JCM 31913 / LMG 7466 / NCTC 11488 / FDC 602W) (Vibrio succinogenes), this protein is Ribonuclease Y.